A 318-amino-acid polypeptide reads, in one-letter code: Probable cell division protein WhiA (318 aa).

Residues 276-310 constitute a DNA-binding region (H-T-H motif); it reads TLQELGEMVESGSISKSGINHRLRKIDQIADKIRN.

It belongs to the WhiA family.

Functionally, involved in cell division and chromosome segregation. The sequence is that of Probable cell division protein WhiA from Exiguobacterium sibiricum (strain DSM 17290 / CCUG 55495 / CIP 109462 / JCM 13490 / 255-15).